The primary structure comprises 414 residues: CinA-like protein (414 aa).

Belongs to the CinA family.

The chain is CinA-like protein from Akkermansia muciniphila (strain ATCC BAA-835 / DSM 22959 / JCM 33894 / BCRC 81048 / CCUG 64013 / CIP 107961 / Muc).